The primary structure comprises 607 residues: Discoidin-inducing complex subunit B (607 aa).

The signal sequence occupies residues M1 to G19. The Extracellular segment spans residues Q20 to S554. Residues N75, N161, N215, N276, N277, N307, N324, N453, N477, and N527 are each glycosylated (N-linked (GlcNAc...) asparagine). The helical transmembrane segment at L555–W575 threads the bilayer. Topologically, residues K576–L607 are cytoplasmic.

In terms of assembly, forms a complex with psiF/dicA.

It is found in the membrane. Its subcellular location is the secreted. Component of a complex that acts as a quorum sensing protein regulating discoidin gene expression during growth and development. Its function in the complex is unclear as it has no ability to induce discoidin during growth and development by itself. The sequence is that of Discoidin-inducing complex subunit B (dicB) from Dictyostelium discoideum (Social amoeba).